The chain runs to 357 residues: Actin, macronuclear (357 aa).

It belongs to the actin family. Post-translationally, met-1 may be removed after translation.

The protein localises to the cytoplasm. The protein resides in the cytoskeleton. The catalysed reaction is ATP + H2O = ADP + phosphate + H(+). In terms of biological role, actins are highly conserved proteins that are involved in various types of cell motility and are ubiquitously expressed in all eukaryotic cells. This chain is Actin, macronuclear, found in Oxytricha fallax.